A 455-amino-acid polypeptide reads, in one-letter code: Kynurenine 3-monooxygenase (455 aa).

The next 2 membrane-spanning stretches (helical) occupy residues 393-416 and 429-453; these read WLFR…SMPY and LLWR…YWQR.

This sequence belongs to the aromatic-ring hydroxylase family. KMO subfamily. The cofactor is FAD.

It localises to the mitochondrion. The protein localises to the membrane. The catalysed reaction is L-kynurenine + NADPH + O2 + H(+) = 3-hydroxy-L-kynurenine + NADP(+) + H2O. Its pathway is cofactor biosynthesis; NAD(+) biosynthesis; quinolinate from L-kynurenine: step 1/3. Catalyzes the hydroxylation of L-kynurenine (L-Kyn) to form 3-hydroxy-L-kynurenine (L-3OHKyn). Required for synthesis of quinolinic acid. This chain is Kynurenine 3-monooxygenase, found in Drosophila willistoni (Fruit fly).